We begin with the raw amino-acid sequence, 141 residues long: Plasmatocyte-spreading peptide (141 aa).

A signal peptide spans 1 to 22 (MKLTINILFCLILISQYNSANG). Residues 23–118 (NLRDLFNNVR…ATGGKDDKGR (96 aa)) constitute a propeptide that is removed on maturation. Positions 46–58 (VKTLFHPSDKSGN) are enriched in basic and acidic residues. The segment at 46 to 118 (VKTLFHPSDK…ATGGKDDKGR (73 aa)) is disordered. Low complexity predominate over residues 83–98 (PVAVTPAPVVSTTTQA). Residues 99–108 (SAPTVATNGT) are compositionally biased toward polar residues. Cys125 and Cys137 are joined by a disulfide.

It belongs to the GBP/PSP1/paralytic peptide family.

Its function is as follows. Mediates the spreading of plasmatocytes to foreign surfaces. Plasmocytes are a class of hemocytes involved in insect cellular immunity. The chain is Plasmatocyte-spreading peptide (PSP1) from Chrysodeixis includens (Soybean looper).